The following is a 564-amino-acid chain: E3 ubiquitin-protein ligase hrd-like protein 1 (564 aa).

The helical transmembrane segment at 17–37 threads the bilayer; that stretch reads SYLALSVLVAIVASVTVFTTF. Asn53 is a glycosylation site (N-linked (GlcNAc...) asparagine). The next 7 helical transmembrane spans lie at 61 to 81, 86 to 106, 123 to 143, 148 to 168, 185 to 205, 215 to 235, and 272 to 292; these read YGLN…HYIL, LIWV…RLII, QAFF…IGPQ, VMPW…QFIT, KISF…FLIS, PAVL…YILF, and LSFA…IFFL. The RING-type; atypical zinc-finger motif lies at 335–373; sequence CVVCWELLGTSRRLPCSHQFHDWCLMWWLAQDSSCPTCR. In terms of domain architecture, CUE spans 432 to 474; the sequence is QLQTMLEQVREMFPQMSVDIIMTDLRQSGSAQSTIENILEGRI.

Its subcellular location is the membrane. Functionally, proposed to have a role in neuroprotection. The sequence is that of E3 ubiquitin-protein ligase hrd-like protein 1 (hrdl-1) from Caenorhabditis elegans.